Here is a 438-residue protein sequence, read N- to C-terminus: MVMSSPTNSARIILISGIASGQGKTTVTAALARKLIRQGLRVRVFKTGPDYLDPMILQRASGAEVYALDLWMVGLDDCRRLLARAASEVDVILIEGVMGLYDGDPSSADLARAFGVPVVVVLDAAKMAQTVGAVVLGLQQYGPVDLAGVIVNRLASPSHASMVTRGIRNVPILATLPKQQQALPERHLGLVQPDEIAQVDQVLDQLADQIEIDMVAWDAIAPVVLDGSLAAASTQQLLAGKTIAIARDAAFAFVYHANLECLRAAGAQLKFFSPLNDETIPAEADAVYIPGGYPELHCATLSSAQRWQDSMRAAHVRNMPILAECGGMMVIADSLIDAQGKKWPMVGLIPGEVAMQGKLAGLGMQSLATEDGELRGHAFHYSTLSTPVEPQAQTVKRSNGAHGEAVYKQGALTATYFHAYFSSCPAATARIFSPEIKA.

A GATase cobBQ-type domain is found at 242 to 426 (TIAIARDAAF…FHAYFSSCPA (185 aa)). The active-site Nucleophile is C325.

Belongs to the CobB/CbiA family. Mg(2+) serves as cofactor.

The catalysed reaction is cob(II)yrinate + 2 L-glutamine + 2 ATP + 2 H2O = cob(II)yrinate a,c diamide + 2 L-glutamate + 2 ADP + 2 phosphate + 2 H(+). It functions in the pathway cofactor biosynthesis; adenosylcobalamin biosynthesis; cob(II)yrinate a,c-diamide from sirohydrochlorin (anaerobic route): step 10/10. Catalyzes the ATP-dependent amidation of the two carboxylate groups at positions a and c of cobyrinate, using either L-glutamine or ammonia as the nitrogen source. In Herminiimonas arsenicoxydans, this protein is Cobyrinate a,c-diamide synthase.